The sequence spans 417 residues: Glucose-1-phosphate adenylyltransferase (417 aa).

Alpha-D-glucose 1-phosphate is bound by residues Tyr105, Gly170, 185 to 186 (EK), and Ser203.

Belongs to the bacterial/plant glucose-1-phosphate adenylyltransferase family. Homotetramer.

It carries out the reaction alpha-D-glucose 1-phosphate + ATP + H(+) = ADP-alpha-D-glucose + diphosphate. It participates in glycan biosynthesis; glycogen biosynthesis. Its function is as follows. Involved in the biosynthesis of ADP-glucose, a building block required for the elongation reactions to produce glycogen. Catalyzes the reaction between ATP and alpha-D-glucose 1-phosphate (G1P) to produce pyrophosphate and ADP-Glc. This chain is Glucose-1-phosphate adenylyltransferase, found in Granulibacter bethesdensis (strain ATCC BAA-1260 / CGDNIH1).